We begin with the raw amino-acid sequence, 573 residues long: L-lactate dehydrogenase (cytochrome) (573 aa).

A mitochondrion-targeting transit peptide spans 1–73 (MFKSQLRTAT…LYQKDKFISA (73 aa)). The Cytochrome b5 heme-binding domain maps to 80–157 (DIELTPEIVS…PPEKHLGPLV (78 aa)). Residues His-115, His-138, and Tyr-208 each coordinate heme b. In terms of domain architecture, FMN hydroxy acid dehydrogenase spans 182–542 (PPLSQMINLH…TPELLDTRSI (361 aa)). A pyruvate-binding site is contributed by Tyr-208. FMN contacts are provided by residues 260 to 263 (SATA), Ser-290, and Gln-313. Tyr-315 is a binding site for pyruvate. Residue Thr-341 participates in FMN binding. Position 357 (Lys-357) interacts with heme b. Position 408 (Lys-408) interacts with FMN. Residues His-432 and Arg-435 each coordinate pyruvate. Residues 468–472 (DGGVR) and 491–492 (GR) each bind FMN.

The protein in the N-terminal section; belongs to the cytochrome b5 family. It in the C-terminal section; belongs to the FMN-dependent alpha-hydroxy acid dehydrogenase family. In terms of assembly, homotetramer. FMN is required as a cofactor. The cofactor is heme b.

The protein localises to the mitochondrion intermembrane space. It catalyses the reaction (S)-lactate + 2 Fe(III)-[cytochrome c] = 2 Fe(II)-[cytochrome c] + pyruvate + 2 H(+). Catalyzes the oxidation of (S)-lactate (L-lactate) to pyruvate with subsequent transfer of electrons to cytochrome c. Is involved in the utilization of (S)-lactate as a sole source of carbon for growth. The sequence is that of L-lactate dehydrogenase (cytochrome) (CYB2) from Wickerhamomyces anomalus (Yeast).